The chain runs to 486 residues: N-succinylglutamate 5-semialdehyde dehydrogenase (486 aa).

220–225 (GSSRTG) lines the NAD(+) pocket. Residues glutamate 243 and cysteine 277 contribute to the active site.

The protein belongs to the aldehyde dehydrogenase family. AstD subfamily.

It carries out the reaction N-succinyl-L-glutamate 5-semialdehyde + NAD(+) + H2O = N-succinyl-L-glutamate + NADH + 2 H(+). It functions in the pathway amino-acid degradation; L-arginine degradation via AST pathway; L-glutamate and succinate from L-arginine: step 4/5. Functionally, catalyzes the NAD-dependent reduction of succinylglutamate semialdehyde into succinylglutamate. The polypeptide is N-succinylglutamate 5-semialdehyde dehydrogenase (Shewanella sediminis (strain HAW-EB3)).